Here is a 336-residue protein sequence, read N- to C-terminus: Tryptophan--tRNA ligase (336 aa).

ATP is bound by residues Gln-9–Ser-11 and Gly-17–Asn-18. The 'HIGH' region motif lies at Pro-10–Asn-18. An L-tryptophan-binding site is contributed by Asp-134. ATP-binding positions include Gly-146–Asp-148, Ile-189, and Lys-198–Ser-202. Residues Lys-198–Ser-202 carry the 'KMSKS' region motif.

The protein belongs to the class-I aminoacyl-tRNA synthetase family. Homodimer.

The protein localises to the cytoplasm. It carries out the reaction tRNA(Trp) + L-tryptophan + ATP = L-tryptophyl-tRNA(Trp) + AMP + diphosphate + H(+). Its function is as follows. Catalyzes the attachment of tryptophan to tRNA(Trp). The chain is Tryptophan--tRNA ligase from Enterococcus faecalis (strain ATCC 700802 / V583).